The following is a 128-amino-acid chain: Large ribosomal subunit protein eL22 (128 aa).

Thr-62 carries the post-translational modification Phosphothreonine. Position 66 is a phosphoserine (Ser-66). Lys-69 is modified (N6-succinyllysine).

Belongs to the eukaryotic ribosomal protein eL22 family. Component of the large ribosomal subunit.

It is found in the cytoplasm. Its function is as follows. Component of the large ribosomal subunit. The ribosome is a large ribonucleoprotein complex responsible for the synthesis of proteins in the cell. This Rattus norvegicus (Rat) protein is Large ribosomal subunit protein eL22 (Rpl22).